Here is a 223-residue protein sequence, read N- to C-terminus: Putative protein phosphatase 2C 63 (223 aa).

Residues 1–22 are disordered; sequence MASSQQAVRETGRGRASSSSAG. In terms of domain architecture, PPM-type phosphatase spans 1 to 212; the sequence is MASSQQAVRE…RNFHVHSSHV (212 aa).

The protein belongs to the PP2C family.

It carries out the reaction O-phospho-L-seryl-[protein] + H2O = L-seryl-[protein] + phosphate. The catalysed reaction is O-phospho-L-threonyl-[protein] + H2O = L-threonyl-[protein] + phosphate. The protein is Putative protein phosphatase 2C 63 of Oryza sativa subsp. japonica (Rice).